Consider the following 316-residue polypeptide: Melanocyte-stimulating hormone receptor (316 aa).

At 1–37 (MAVQGSQRRLLGSLNSTPTAIPQLGLAANQTGARCLE) the chain is on the extracellular side. N-linked (GlcNAc...) asparagine glycosylation occurs at Asn-29. A helical transmembrane segment spans residues 38 to 63 (VSIPDGLFLSLGLVSLVENVLVVATI). Topologically, residues 64-72 (AKNRNLHSP) are cytoplasmic. The helical transmembrane segment at 73–93 (MYCFICCLALSDLLVSGSNVV) threads the bilayer. Residues 94–117 (DTLLLLLEAGALAARAAVLQQLDN) are Extracellular-facing. Residues 118–139 (VIDVITCSSMLSSLCFLGAIAV) traverse the membrane as a helical segment. Topologically, residues 140–162 (DRYISIFYALRYRSIVTLPRARR) are cytoplasmic. The helical transmembrane segment at 163–182 (AVAAIWVASVLFSTLFIAYY) threads the bilayer. The Extracellular portion of the chain corresponds to 183 to 190 (DHTAVLLC). A helical transmembrane segment spans residues 191-210 (LVVFFLAMLVLMAVLYVHML). The Cytoplasmic segment spans residues 211–239 (ARACQHAQGIARLHKRQRPVHKGFGLKGP). A helical membrane pass occupies residues 240–265 (VTLTILLGIFFLCWGPFFLHLTLIVL). At 266–278 (CPEHPTCGCIFKN) the chain is on the extracellular side. A helical transmembrane segment spans residues 279 to 299 (FNLFLALIICNAIIDPLIYAF). The Cytoplasmic segment spans residues 300–316 (HSQELRRTLKEVLTCSW). Cys-314 is lipidated: S-palmitoyl cysteine.

It belongs to the G-protein coupled receptor 1 family. As to quaternary structure, interacts with MGRN1, but does not undergo MGRN1-mediated ubiquitination; this interaction competes with GNAS-binding and thus inhibits agonist-induced cAMP production. Interacts with OPN3; the interaction results in a decrease in MC1R-mediated cAMP signaling and ultimately a decrease in melanin production in melanocytes.

The protein localises to the cell membrane. Its function is as follows. Receptor for MSH (alpha, beta and gamma) and ACTH. The activity of this receptor is mediated by G proteins which activate adenylate cyclase. Mediates melanogenesis, the production of eumelanin (black/brown) and phaeomelanin (red/yellow), via regulation of cAMP signaling in melanocytes. In Gorilla gorilla gorilla (Western lowland gorilla), this protein is Melanocyte-stimulating hormone receptor (MC1R).